A 475-amino-acid polypeptide reads, in one-letter code: MMQYSPKFNNAKVLVLGDVMLDRYWFGATNRISPEAPVPVVKVQDIEERAGGAANVAMNIASLSVPVALHGLIGQDDAGRALDKLLNSHNIQNHCVALDSHPTITKLRILSRHQQLLRLDFEEGFHHVASDSLLAKLEQEITAYGALILSDYGKGTLESVQQMIQVARKAGVPTLIDPKGTDFERYRGATLLTPNMSEFEAVVGHCKDDDEIVEKGLKLIADFELTALLVTRSEKGMTLLRPNQAPFHLPTQAKEVYDVTGAGDTVISVLATAIADGRPYEEACYLANAAAGVVVGKLGTSTVTPTELENAIHHREETGFGILAEDELKRAVEQAKQRGEKIVMTNGCFDILHPGHVSYLENARKLGDRLIVAVNTDESVKRLKGESRPINDLNARMAVLAGLASVDWVVPFAEDTPQRLIGEILPNLLVKGGDYKPEEIAGSQEVWANGGEVKVLNFENGCSTTNVIKKIQASK.

The tract at residues 1-318 is ribokinase; the sequence is MMQYSPKFNN…ENAIHHREET (318 aa). 195–198 is a binding site for ATP; the sequence is NMSE. Asp-264 is a catalytic residue. A cytidylyltransferase region spans residues 344–475; sequence MTNGCFDILH…NVIKKIQASK (132 aa).

The protein in the N-terminal section; belongs to the carbohydrate kinase PfkB family. This sequence in the C-terminal section; belongs to the cytidylyltransferase family. As to quaternary structure, homodimer.

The catalysed reaction is D-glycero-beta-D-manno-heptose 7-phosphate + ATP = D-glycero-beta-D-manno-heptose 1,7-bisphosphate + ADP + H(+). It catalyses the reaction D-glycero-beta-D-manno-heptose 1-phosphate + ATP + H(+) = ADP-D-glycero-beta-D-manno-heptose + diphosphate. Its pathway is nucleotide-sugar biosynthesis; ADP-L-glycero-beta-D-manno-heptose biosynthesis; ADP-L-glycero-beta-D-manno-heptose from D-glycero-beta-D-manno-heptose 7-phosphate: step 1/4. It functions in the pathway nucleotide-sugar biosynthesis; ADP-L-glycero-beta-D-manno-heptose biosynthesis; ADP-L-glycero-beta-D-manno-heptose from D-glycero-beta-D-manno-heptose 7-phosphate: step 3/4. Catalyzes the phosphorylation of D-glycero-D-manno-heptose 7-phosphate at the C-1 position to selectively form D-glycero-beta-D-manno-heptose-1,7-bisphosphate. In terms of biological role, catalyzes the ADP transfer from ATP to D-glycero-beta-D-manno-heptose 1-phosphate, yielding ADP-D-glycero-beta-D-manno-heptose. The protein is Bifunctional protein HldE of Actinobacillus pleuropneumoniae serotype 5b (strain L20).